Here is a 106-residue protein sequence, read N- to C-terminus: Large ribosomal subunit protein uL24 (106 aa).

Belongs to the universal ribosomal protein uL24 family. As to quaternary structure, part of the 50S ribosomal subunit.

Its function is as follows. One of two assembly initiator proteins, it binds directly to the 5'-end of the 23S rRNA, where it nucleates assembly of the 50S subunit. Functionally, one of the proteins that surrounds the polypeptide exit tunnel on the outside of the subunit. The polypeptide is Large ribosomal subunit protein uL24 (Albidiferax ferrireducens (strain ATCC BAA-621 / DSM 15236 / T118) (Rhodoferax ferrireducens)).